The sequence spans 59 residues: Large ribosomal subunit protein bL32 (59 aa).

It belongs to the bacterial ribosomal protein bL32 family.

This is Large ribosomal subunit protein bL32 from Mesoplasma florum (strain ATCC 33453 / NBRC 100688 / NCTC 11704 / L1) (Acholeplasma florum).